Here is a 63-residue protein sequence, read N- to C-terminus: Small integral membrane protein 43 (63 aa).

Important for interaction with SLC2A1 and SLC2A3 regions lie at residues 7–29 (LLLYLALFFFLLFLLFLLLFVVI) and 51–57 (HREPWGF). A helical transmembrane segment spans residues 9–29 (LYLALFFFLLFLLFLLLFVVI).

As to quaternary structure, interacts with glucose transporters SLC2A1/GLUT1 and SLC2A3/GLUT3; the interactions may promote SLC2A1- and SLC2A3-mediated glucose transport to meet the energy needs of mesendoderm differentiation.

It localises to the cell membrane. Functionally, required for mesendoderm differentiation. Interacts with glucose transporters and promotes glucose uptake. Probably augments the glucose uptake capacity of glucose transporter proteins to meet the energy needs of mesendoderm differentiation. The protein is Small integral membrane protein 43 of Homo sapiens (Human).